The sequence spans 348 residues: Oxygen-dependent coproporphyrinogen-III oxidase (348 aa).

Ser104 contacts substrate. His108 and His118 together coordinate a divalent metal cation. His118 (proton donor) is an active-site residue. Position 120 to 122 (120 to 122 (NYR)) interacts with substrate. Positions 152 and 182 each coordinate a divalent metal cation. The interval 272–307 (YAEFNLVWDRGTIFGLQTNGRTESILMSLPPLARWE) is important for dimerization.

Belongs to the aerobic coproporphyrinogen-III oxidase family. In terms of assembly, homodimer. A divalent metal cation is required as a cofactor.

The protein resides in the cytoplasm. The enzyme catalyses coproporphyrinogen III + O2 + 2 H(+) = protoporphyrinogen IX + 2 CO2 + 2 H2O. It functions in the pathway porphyrin-containing compound metabolism; protoporphyrin-IX biosynthesis; protoporphyrinogen-IX from coproporphyrinogen-III (O2 route): step 1/1. In terms of biological role, involved in the heme and chlorophyll biosynthesis. Catalyzes the aerobic oxidative decarboxylation of propionate groups of rings A and B of coproporphyrinogen-III to yield the vinyl groups in protoporphyrinogen-IX. The polypeptide is Oxygen-dependent coproporphyrinogen-III oxidase (Prochlorococcus marinus (strain NATL1A)).